A 43-amino-acid polypeptide reads, in one-letter code: Protein PsbN (43 aa).

The chain crosses the membrane as a helical span at residues Thr5–Phe27.

It belongs to the PsbN family.

It is found in the plastid. Its subcellular location is the chloroplast thylakoid membrane. Functionally, may play a role in photosystem I and II biogenesis. In Mesostigma viride (Green alga), this protein is Protein PsbN.